Consider the following 352-residue polypeptide: Protein RecA (352 aa).

ATP is bound at residue 68 to 75; the sequence is GPESSGKT.

This sequence belongs to the RecA family.

Its subcellular location is the cytoplasm. In terms of biological role, can catalyze the hydrolysis of ATP in the presence of single-stranded DNA, the ATP-dependent uptake of single-stranded DNA by duplex DNA, and the ATP-dependent hybridization of homologous single-stranded DNAs. It interacts with LexA causing its activation and leading to its autocatalytic cleavage. The chain is Protein RecA from Clostridium perfringens (strain ATCC 13124 / DSM 756 / JCM 1290 / NCIMB 6125 / NCTC 8237 / Type A).